The primary structure comprises 275 residues: 4-hydroxy-tetrahydrodipicolinate reductase (275 aa).

NAD(+) contacts are provided by residues 13 to 18 (GAAGKM) and 108 to 110 (GTT). Catalysis depends on His-164, which acts as the Proton donor/acceptor. (S)-2,3,4,5-tetrahydrodipicolinate is bound at residue His-165. The active-site Proton donor is Lys-168. 174 to 175 (GT) contacts (S)-2,3,4,5-tetrahydrodipicolinate.

Belongs to the DapB family.

It is found in the cytoplasm. The enzyme catalyses (S)-2,3,4,5-tetrahydrodipicolinate + NAD(+) + H2O = (2S,4S)-4-hydroxy-2,3,4,5-tetrahydrodipicolinate + NADH + H(+). It catalyses the reaction (S)-2,3,4,5-tetrahydrodipicolinate + NADP(+) + H2O = (2S,4S)-4-hydroxy-2,3,4,5-tetrahydrodipicolinate + NADPH + H(+). It participates in amino-acid biosynthesis; L-lysine biosynthesis via DAP pathway; (S)-tetrahydrodipicolinate from L-aspartate: step 4/4. Catalyzes the conversion of 4-hydroxy-tetrahydrodipicolinate (HTPA) to tetrahydrodipicolinate. The polypeptide is 4-hydroxy-tetrahydrodipicolinate reductase (Acaryochloris marina (strain MBIC 11017)).